Reading from the N-terminus, the 92-residue chain is Small ribosomal subunit protein uS17 (92 aa).

Belongs to the universal ribosomal protein uS17 family. In terms of assembly, part of the 30S ribosomal subunit.

In terms of biological role, one of the primary rRNA binding proteins, it binds specifically to the 5'-end of 16S ribosomal RNA. The polypeptide is Small ribosomal subunit protein uS17 (Corynebacterium diphtheriae (strain ATCC 700971 / NCTC 13129 / Biotype gravis)).